The following is a 236-amino-acid chain: 7-cyano-7-deazaguanine synthase (236 aa).

21-31 is a binding site for ATP; that stretch reads LSGGLDSATVL. 4 residues coordinate Zn(2+): C202, C212, C215, and C218.

It belongs to the QueC family. Zn(2+) is required as a cofactor.

It catalyses the reaction 7-carboxy-7-deazaguanine + NH4(+) + ATP = 7-cyano-7-deazaguanine + ADP + phosphate + H2O + H(+). It participates in purine metabolism; 7-cyano-7-deazaguanine biosynthesis. In terms of biological role, catalyzes the ATP-dependent conversion of 7-carboxy-7-deazaguanine (CDG) to 7-cyano-7-deazaguanine (preQ(0)). The polypeptide is 7-cyano-7-deazaguanine synthase (Frankia casuarinae (strain DSM 45818 / CECT 9043 / HFP020203 / CcI3)).